A 140-amino-acid polypeptide reads, in one-letter code: 6,7-dimethyl-8-ribityllumazine synthase (140 aa).

5-amino-6-(D-ribitylamino)uracil is bound by residues Phe-11, 42–44 (ALE), and 66–68 (VVI). Residue 71-72 (ET) coordinates (2S)-2-hydroxy-3-oxobutyl phosphate. The active-site Proton donor is the His-74. A 5-amino-6-(D-ribitylamino)uracil-binding site is contributed by Asn-98. Residue Arg-112 participates in (2S)-2-hydroxy-3-oxobutyl phosphate binding.

It belongs to the DMRL synthase family.

The enzyme catalyses (2S)-2-hydroxy-3-oxobutyl phosphate + 5-amino-6-(D-ribitylamino)uracil = 6,7-dimethyl-8-(1-D-ribityl)lumazine + phosphate + 2 H2O + H(+). It participates in cofactor biosynthesis; riboflavin biosynthesis; riboflavin from 2-hydroxy-3-oxobutyl phosphate and 5-amino-6-(D-ribitylamino)uracil: step 1/2. Functionally, catalyzes the formation of 6,7-dimethyl-8-ribityllumazine by condensation of 5-amino-6-(D-ribitylamino)uracil with 3,4-dihydroxy-2-butanone 4-phosphate. This is the penultimate step in the biosynthesis of riboflavin. The protein is 6,7-dimethyl-8-ribityllumazine synthase of Erythrobacter litoralis (strain HTCC2594).